Here is a 701-residue protein sequence, read N- to C-terminus: Polyribonucleotide nucleotidyltransferase (701 aa).

Asp-485 and Asp-491 together coordinate Mg(2+). Positions 552-611 (PRITTLKINPEKIRDVIGKGGATIRALTEETGTTIELEDDGTVKIASSNGEATKEAIRRI) constitute a KH domain. An S1 motif domain is found at 621–689 (GTVYNGKVVR…RQGRVRLSMK (69 aa)).

This sequence belongs to the polyribonucleotide nucleotidyltransferase family. In terms of assembly, component of the RNA degradosome, which is a multiprotein complex involved in RNA processing and mRNA degradation. Mg(2+) is required as a cofactor.

The protein resides in the cytoplasm. The catalysed reaction is RNA(n+1) + phosphate = RNA(n) + a ribonucleoside 5'-diphosphate. Its function is as follows. Involved in mRNA degradation. Catalyzes the phosphorolysis of single-stranded polyribonucleotides processively in the 3'- to 5'-direction. In Shewanella piezotolerans (strain WP3 / JCM 13877), this protein is Polyribonucleotide nucleotidyltransferase.